The sequence spans 44 residues: Non-structural protein 7b (44 aa).

A helical membrane pass occupies residues 9 to 29 (FYLCFLAFLLFLVLIMLLIFW).

Its subcellular location is the host membrane. The sequence is that of Non-structural protein 7b from Bat coronavirus HKU3 (BtCoV).